Reading from the N-terminus, the 295-residue chain is Small ribosomal subunit protein uS2 (295 aa).

The tract at residues 247–295 (TDKGLTSKNVSKLKQTKKFSKTKNIDEETNTEFEQALNDADENKNSDNA) is disordered.

Belongs to the universal ribosomal protein uS2 family.

The polypeptide is Small ribosomal subunit protein uS2 (Rickettsia conorii (strain ATCC VR-613 / Malish 7)).